A 399-amino-acid chain; its full sequence is MADSQRLSTASGVKDGQPPWKKKKLSNDTTSNPSLPYDVILIILARVSRSYYTNLSLVSKSFRSILTSPELYKTRTLLGKTENFLYVCLRFPDEANPRWFTLYRKPNQTLTDHTTKKKKKKKKKEEKSSVNLLAPISILNSHPVEWSAIISVDHYLYAISADIEKAPYSNVPYLDCRTHTWNEAPRMRLAHTNSEFEGIVYLPGSFESPDSLNCVEVYNTMTQTWKPVPPEKRMFKLENLEKKIYYKSFHLDSRAGKGLSLSYKSKHLTCGLVVLDTVDSYLRSSCMIENIAYFYRKGNFIWRGLDGKILVYGKIEGLEGLPKFSRYSSVQLAEYGGKLVVLWDKYVPASGYKEKMIWCAEISLEKRNGKEIWGNVEWFDAVLTVPKSYKILCATAATL.

The span at 1–11 (MADSQRLSTAS) shows a compositional bias: polar residues. A disordered region spans residues 1 to 29 (MADSQRLSTASGVKDGQPPWKKKKLSNDT). Residues 29–75 (TTSNPSLPYDVILIILARVSRSYYTNLSLVSKSFRSILTSPELYKTR) enclose the F-box domain. One copy of the Kelch repeat lies at 199–248 (IVYLPGSFESPDSLNCVEVYNTMTQTWKPVPPEKRMFKLENLEKKIYYKS).

In Arabidopsis thaliana (Mouse-ear cress), this protein is F-box/kelch-repeat protein At5g48980.